We begin with the raw amino-acid sequence, 480 residues long: Adenylosuccinate synthetase, chloroplastic (480 aa).

A chloroplast-targeting transit peptide spans 1 to 54 (MATARVMVADRARAFGGTTATRARRDDQGRRVTIARGIPSRARVVVARASERAY). GTP contacts are provided by residues 69-75 (GDEGKGK) and 97-99 (GHT). Asp70 acts as the Proton acceptor in catalysis. Mg(2+) contacts are provided by Asp70 and Gly97. Residues 70–73 (DEGK), 95–98 (NAGH), Thr187, Arg201, Asn278, Thr293, and Arg357 each bind IMP. His98 functions as the Proton donor in the catalytic mechanism. 353–359 (TTTGRPR) lines the substrate pocket. GTP contacts are provided by residues Arg359, 385–387 (KLD), and 468–470 (GVG).

It belongs to the adenylosuccinate synthetase family. As to quaternary structure, homodimer. Mg(2+) serves as cofactor.

The protein localises to the plastid. Its subcellular location is the chloroplast. The catalysed reaction is IMP + L-aspartate + GTP = N(6)-(1,2-dicarboxyethyl)-AMP + GDP + phosphate + 2 H(+). It functions in the pathway purine metabolism; AMP biosynthesis via de novo pathway; AMP from IMP: step 1/2. In terms of biological role, plays an important role in the de novo pathway and in the salvage pathway of purine nucleotide biosynthesis. Catalyzes the first committed step in the biosynthesis of AMP from IMP. The protein is Adenylosuccinate synthetase, chloroplastic of Ostreococcus tauri.